A 152-amino-acid chain; its full sequence is Immunity protein YobK (152 aa).

Interacts with cognate toxin YobL but not with non-cognate putative toxin YeeF. The interaction inhibits the toxic activity of YobL.

The protein resides in the cytoplasm. Its function is as follows. Immunity component of one of 6 LXG toxin-immunity modules in this strain. They promote kin selection, mediate competition in biofilms, and drive spatial segregation of different strains, indicating that LXG toxins may help avoid warfare between strains in biofilms. Mediates intercellular competition during biofilm formation; disruption of the operon disadvantages the bacteria, but overexpression of the cognate immunity protein restores growth in competition with wild-type. In situ neutralizes the toxic effect of cognate toxin YobL. Neutralizes the toxic activity of cognate toxin YobL upon expression in E.coli. Does not have immunity protein activity on other LXG toxins. This Bacillus subtilis (strain 168) protein is Immunity protein YobK (yobK).